Reading from the N-terminus, the 244-residue chain is Orotidine 5'-phosphate decarboxylase (244 aa).

Residues Asp-12, Lys-34, 61 to 70, Thr-125, Arg-187, Gln-196, Gly-216, and Arg-217 each bind substrate; that span reads DLKLFDIPNT. The Proton donor role is filled by Lys-63.

It belongs to the OMP decarboxylase family. Type 1 subfamily. As to quaternary structure, homodimer.

It catalyses the reaction orotidine 5'-phosphate + H(+) = UMP + CO2. It participates in pyrimidine metabolism; UMP biosynthesis via de novo pathway; UMP from orotate: step 2/2. In terms of biological role, catalyzes the decarboxylation of orotidine 5'-monophosphate (OMP) to uridine 5'-monophosphate (UMP). The chain is Orotidine 5'-phosphate decarboxylase from Dictyoglomus turgidum (strain DSM 6724 / Z-1310).